The primary structure comprises 935 residues: C-1-tetrahydrofolate synthase, cytoplasmic (935 aa).

Methionine 1 carries the N-acetylmethionine modification. Residues 2–291 form a methylenetetrahydrofolate dehydrogenase and methenyltetrahydrofolate cyclohydrolase (D/C) domain region; sequence APAEILNGRE…MLMQSTVESA (290 aa). Substrate-binding positions include 52 to 56 and 99 to 101; these read YINVK and VQL. The active site involves lysine 56. Residues 172 to 174 and serine 197 each bind NADP(+); that span reads GRS. Position 272-276 (272-276) interacts with substrate; that stretch reads PGGVG. The interval 310–935 is formyltetrahydrofolate synthetase domain; sequence LNLKTPDPSD…PETQQVNGLF (626 aa). Serine 318 carries the post-translational modification Phosphoserine. 380–387 provides a ligand contact to ATP; that stretch reads TPLGEGKS. Serine 413 and serine 490 each carry phosphoserine.

The protein in the N-terminal section; belongs to the tetrahydrofolate dehydrogenase/cyclohydrolase family. This sequence in the C-terminal section; belongs to the formate--tetrahydrofolate ligase family. As to quaternary structure, homodimer.

The protein resides in the cytoplasm. The enzyme catalyses (6R)-5,10-methylene-5,6,7,8-tetrahydrofolate + NADP(+) = (6R)-5,10-methenyltetrahydrofolate + NADPH. It carries out the reaction (6R)-5,10-methenyltetrahydrofolate + H2O = (6R)-10-formyltetrahydrofolate + H(+). It catalyses the reaction (6S)-5,6,7,8-tetrahydrofolate + formate + ATP = (6R)-10-formyltetrahydrofolate + ADP + phosphate. It participates in one-carbon metabolism; tetrahydrofolate interconversion. Its function is as follows. Trifunctional enzyme that catalyzes the interconversion of three forms of one-carbon-substituted tetrahydrofolate: (6R)-5,10-methylene-5,6,7,8-tetrahydrofolate, 5,10-methenyltetrahydrofolate and (6S)-10-formyltetrahydrofolate. These derivatives of tetrahydrofolate are differentially required in nucleotide and amino acid biosynthesis, (6S)-10-formyltetrahydrofolate being required for purine biosynthesis while (6R)-5,10-methylene-5,6,7,8-tetrahydrofolate is used for serine and methionine biosynthesis for instance. In Pongo abelii (Sumatran orangutan), this protein is C-1-tetrahydrofolate synthase, cytoplasmic (MTHFD1).